We begin with the raw amino-acid sequence, 310 residues long: Malate dehydrogenase (310 aa).

NAD(+)-binding positions include 7–12 (GAGHVG) and D32. Positions 81 and 87 each coordinate substrate. NAD(+)-binding positions include N94 and 117 to 119 (VSN). N119 and R150 together coordinate substrate. Catalysis depends on H174, which acts as the Proton acceptor.

Belongs to the LDH/MDH superfamily. MDH type 3 family.

It carries out the reaction (S)-malate + NAD(+) = oxaloacetate + NADH + H(+). Functionally, catalyzes the reversible oxidation of malate to oxaloacetate. This is Malate dehydrogenase from Chlorobium phaeobacteroides (strain BS1).